Here is a 361-residue protein sequence, read N- to C-terminus: Aurora kinase B-A (361 aa).

One can recognise a Protein kinase domain in the interval F93 to V343. ATP-binding positions include L99–V107 and K122. The Proton acceptor role is filled by D216.

The protein belongs to the protein kinase superfamily. Ser/Thr protein kinase family. Aurora subfamily. Component of the CPC at least composed of survivin/birc5, incenp, cdca8/borealin and/or cdca9/dasra-A, and aurkb/aurora-B. Interacts directly (via N-terminus and kinase domain) with incenp (via C terminus), and may weakly interact (via N-terminus) with birc5.1 to stabilize the complex. Interacts with mtus1. Requires Mg(2+) as cofactor. In terms of processing, phosphorylated, stimulates kinase activity.

It localises to the nucleus. Its subcellular location is the chromosome. It carries out the reaction L-seryl-[protein] + ATP = O-phospho-L-seryl-[protein] + ADP + H(+). It catalyses the reaction L-threonyl-[protein] + ATP = O-phospho-L-threonyl-[protein] + ADP + H(+). Its activity is regulated as follows. Kinase activity is stimulated by both birc5/survivin-binding and cell-cycle specific phosphorylation. Serine/threonine-protein kinase component of the chromosomal passenger complex (CPC), a complex that acts as a key regulator of mitosis. The CPC complex has essential functions at the centromere in ensuring correct chromosome alignment and segregation and is required for chromatin-induced microtubule stabilization and spindle assembly. Involved in the bipolar attachment of spindle microtubules to kinetochores and is a key regulator for the onset of cytokinesis during mitosis. Required for central/midzone spindle assembly and cleavage furrow formation. Key component of the cytokinesis checkpoint, a process required to delay abscission to prevent both premature resolution of intercellular chromosome bridges and accumulation of DNA damage. Phosphorylates 'Ser-10' of histone H3 during mitosis. The protein is Aurora kinase B-A (aurkb-a) of Xenopus laevis (African clawed frog).